The sequence spans 265 residues: Beta-lactamase SHV-4 (265 aa).

The active-site Acyl-ester intermediate is S45. Residues C52 and C98 are joined by a disulfide bond. The active-site Proton acceptor is the E143. Position 209–211 (209–211 (KTG)) interacts with substrate.

The protein belongs to the class-A beta-lactamase family.

It carries out the reaction a beta-lactam + H2O = a substituted beta-amino acid. Functionally, SHV enzymes hydrolyze broad spectrum cephalosporins notably cefotaxime and ceftazidime. SHV-4 causes particularly high levels of resistance to aztreonam and ceftazidime. This chain is Beta-lactamase SHV-4 (bla), found in Klebsiella pneumoniae.